Here is a 178-residue protein sequence, read N- to C-terminus: 2-C-methyl-D-erythritol 2,4-cyclodiphosphate synthase (178 aa).

3 residues coordinate a divalent metal cation: D24, H26, and H61. 24-26 (DSH) contributes to the 4-CDP-2-C-methyl-D-erythritol 2-phosphate binding site. 150–153 (TSGE) serves as a coordination point for 4-CDP-2-C-methyl-D-erythritol 2-phosphate.

It belongs to the IspF family. Homotrimer. Requires a divalent metal cation as cofactor.

It carries out the reaction 4-CDP-2-C-methyl-D-erythritol 2-phosphate = 2-C-methyl-D-erythritol 2,4-cyclic diphosphate + CMP. It participates in isoprenoid biosynthesis; isopentenyl diphosphate biosynthesis via DXP pathway; isopentenyl diphosphate from 1-deoxy-D-xylulose 5-phosphate: step 4/6. In terms of biological role, involved in the biosynthesis of isopentenyl diphosphate (IPP) and dimethylallyl diphosphate (DMAPP), two major building blocks of isoprenoid compounds. Catalyzes the conversion of 4-diphosphocytidyl-2-C-methyl-D-erythritol 2-phosphate (CDP-ME2P) to 2-C-methyl-D-erythritol 2,4-cyclodiphosphate (ME-CPP) with a corresponding release of cytidine 5-monophosphate (CMP). In Chlamydia trachomatis serovar L2b (strain UCH-1/proctitis), this protein is 2-C-methyl-D-erythritol 2,4-cyclodiphosphate synthase.